Here is a 492-residue protein sequence, read N- to C-terminus: Metal cation symporter ZIP14 (492 aa).

An N-terminal signal peptide occupies residues 1 to 30; that stretch reads MKLLLLHPAFQSCLLLTLLGLWRTTPEAHA. Topologically, residues 31–157 are extracellular; that stretch reads SSLGAPAISA…PSAVEVWGYG (127 aa). N-linked (GlcNAc...) asparagine glycans are attached at residues Asn-77, Asn-87, and Asn-102. A helical transmembrane segment spans residues 158 to 178; the sequence is LLCVTVISLCSLLGASVVPFM. Topologically, residues 179-186 are cytoplasmic; the sequence is KKTFYKRL. The chain crosses the membrane as a helical span at residues 187-207; that stretch reads LLYFIALAIGTLYSNALFQLI. Residues 208 to 224 are Extracellular-facing; it reads PEAFGFNPLEDYYVSKS. A helical membrane pass occupies residues 225–245; sequence AVVFGGFYLFFFTEKILKILL. The Cytoplasmic portion of the chain corresponds to 246-397; it reads KQKNEHHHGH…LLNAGMSIQQ (152 aa). The short motif at 251–258 is the HHHGHXHX-motif element; that stretch reads HHHGHSHY. Positions 376–381 match the XEXPHE-motif motif; sequence EEFPHE. The helical transmembrane segment at 398–418 threads the bilayer; that stretch reads ALFFNFLSACCCYLGLAFGIL. Over 419-424 the chain is Extracellular; that stretch reads AGSHFS. The helical transmembrane segment at 425–445 threads the bilayer; that stretch reads ANWIFALAGGMFLYISLADMF. The Cytoplasmic segment spans residues 446–460; sequence PEMNEVCQEDERKGS. The chain crosses the membrane as a helical span at residues 461–481; it reads ILIPFIIQNLGLLTGFTIMVV. The Extracellular portion of the chain corresponds to 482-492; that stretch reads LTMYSGQIQIG.

It belongs to the ZIP transporter (TC 2.A.5) family. Homotrimer. In terms of processing, ubiquitinated. Ubiquitination occurs upon iron depletion. The ubiquitinated form undergoes proteasomal degradation. Post-translationally, N-glycosylated. N-glycosylation at Asn-102 is required for iron-regulated extraction of the transporter from membranes and subsequent proteasomal degradation. Ubiquitously expressed, with higher expression in liver, pancreas, fetal liver, thyroid gland, left and right ventricle, right atrium and fetal heart. Weakly expressed in spleen, thymus, and peripheral blood leukocytes. Expressed in liver and in brain by large neurons in the globus pallidus, the insular cortex and the dentate nucleus and to a lower extent in the putamen and the caudate nucleus (at protein level). Expressed in osteoblasts and giant osteoclast-like cells, but not in osteocytes found osteoblastoma and giant cell tumors (at protein level). Expressed by microvascular capillary endothelial cells that constitute the blood-brain barrier (at protein level). Expressed by macrophages. In terms of tissue distribution, widely expressed but not detected in brain, heart, skeletal muscle, placenta and fetal skin.

It localises to the cell membrane. The protein resides in the apical cell membrane. The protein localises to the basolateral cell membrane. Its subcellular location is the early endosome membrane. It is found in the late endosome membrane. It localises to the lysosome membrane. The catalysed reaction is Zn(2+)(out) + 2 hydrogencarbonate(out) = Zn(2+)(in) + 2 hydrogencarbonate(in). It carries out the reaction Mn(2+)(out) + 2 hydrogencarbonate(out) = Mn(2+)(in) + 2 hydrogencarbonate(in). It catalyses the reaction Fe(2+)(out) + 2 hydrogencarbonate(out) = Fe(2+)(in) + 2 hydrogencarbonate(in). The enzyme catalyses Cd(2+)(out) + 2 hydrogencarbonate(out) = Cd(2+)(in) + 2 hydrogencarbonate(in). In terms of biological role, electroneutral transporter of the plasma membrane mediating the cellular uptake of the divalent metal cations zinc, manganese and iron that are important for tissue homeostasis, metabolism, development and immunity. Functions as an energy-dependent symporter, transporting through the membranes an electroneutral complex composed of a divalent metal cation and two bicarbonate anions. Beside these endogenous cellular substrates, can also import cadmium a non-essential metal which is cytotoxic and carcinogenic. Controls the cellular uptake by the intestinal epithelium of systemic zinc, which is in turn required to maintain tight junctions and the intestinal permeability. Modifies the activity of zinc-dependent phosphodiesterases, thereby indirectly regulating G protein-coupled receptor signaling pathways important for gluconeogenesis and chondrocyte differentiation. Regulates insulin receptor signaling, glucose uptake, glycogen synthesis and gluconeogenesis in hepatocytes through the zinc-dependent intracellular catabolism of insulin. Through zinc cellular uptake also plays a role in the adaptation of cells to endoplasmic reticulum stress. Major manganese transporter of the basolateral membrane of intestinal epithelial cells, it plays a central role in manganese systemic homeostasis through intestinal manganese uptake. Also involved in manganese extracellular uptake by cells of the blood-brain barrier. May also play a role in manganese and zinc homeostasis participating in their elimination from the blood through the hepatobiliary excretion. Also functions in the extracellular uptake of free iron. May also function intracellularly and mediate the transport from endosomes to cytosol of iron endocytosed by transferrin. Plays a role in innate immunity by regulating the expression of cytokines by activated macrophages. In Homo sapiens (Human), this protein is Metal cation symporter ZIP14.